A 180-amino-acid polypeptide reads, in one-letter code: Large ribosomal subunit protein uL6 (180 aa).

The protein belongs to the universal ribosomal protein uL6 family. As to quaternary structure, part of the 50S ribosomal subunit.

Functionally, this protein binds to the 23S rRNA, and is important in its secondary structure. It is located near the subunit interface in the base of the L7/L12 stalk, and near the tRNA binding site of the peptidyltransferase center. The protein is Large ribosomal subunit protein uL6 of Mycoplasma capricolum subsp. capricolum (strain California kid / ATCC 27343 / NCTC 10154).